A 302-amino-acid polypeptide reads, in one-letter code: 4-hydroxy-tetrahydrodipicolinate synthase (302 aa).

Thr57 serves as a coordination point for pyruvate. The active-site Proton donor/acceptor is Tyr145. Lys173 serves as the catalytic Schiff-base intermediate with substrate. Ile213 lines the pyruvate pocket.

It belongs to the DapA family. Homotetramer; dimer of dimers.

It is found in the cytoplasm. The enzyme catalyses L-aspartate 4-semialdehyde + pyruvate = (2S,4S)-4-hydroxy-2,3,4,5-tetrahydrodipicolinate + H2O + H(+). Its pathway is amino-acid biosynthesis; L-lysine biosynthesis via DAP pathway; (S)-tetrahydrodipicolinate from L-aspartate: step 3/4. Catalyzes the condensation of (S)-aspartate-beta-semialdehyde [(S)-ASA] and pyruvate to 4-hydroxy-tetrahydrodipicolinate (HTPA). The protein is 4-hydroxy-tetrahydrodipicolinate synthase of Corynebacterium aurimucosum (strain ATCC 700975 / DSM 44827 / CIP 107346 / CN-1) (Corynebacterium nigricans).